Reading from the N-terminus, the 264-residue chain is MSETHIPYRLDGKIALVTGSGRGIGAAMAVELGRLGAKVVVNYVNSVESAEKVVDEIKGLGSDAVAIQADVRQVSQIVELMDKAVKHFGGLDIVCSNSGVVSFGHFGDVTEEEFDRVFSLNTRGQFFVAREAYRHLNNGGRIILMSSNTAKDLSVPKHSLYSGSKGAIDSFVRIFSKDAGDKKITVNAVAPGGTVTDMFHSCSQHYIPGGDKYTAEERQAMAAHASPLTRNGFPLDIAKVVCFLASDEAEWVNGKVLTLDGGAA.

Residues Ile-24, Asp-70, Asn-97, and Arg-130 each contribute to the NADP(+) site. Residues Ser-146 and Ser-147 each act as proton donor in the active site. 3 residues coordinate NADP(+): Tyr-161, Lys-165, and Thr-196. Tyr-161 acts as the Proton acceptor in catalysis. Catalysis depends on Lys-165, which acts as the Lowers pKa of active site Tyr.

It belongs to the short-chain dehydrogenases/reductases (SDR) family.

Its pathway is pigment biosynthesis. In terms of biological role, short chain dehydrogenase; part of the ergochrome gene cluster responsible for the typical purple-black color of the ergot sclerotia. The ergochrome gene cluster produces several ergot pigments including the yellow ergochrome secalonic acid and its derivatives, as well as the red anthraquinones endocrocin and clavorubin. The pathway begins with the synthesis of atrochrysone thioester by the polyketide synthase (PKS) CPUR_05437. The atrochrysone carboxyl ACP thioesterase CPUR_05436 then breaks the thioester bond and releases the atrochrysone carboxylic acid from CPUR_05437. The atrochrysone carboxylic acid is then converted to atrochrysone which is further transformed into emodin anthrone. The next step is performed by the anthrone oxygenase CPUR_05434 that catalyzes the oxidation of emodinanthrone to emodin. Emodin is further modified to yield monodictyphenone via several steps involving CPUR_05427, CPUR_05428, CPUR_05429 and CPUR_05430. The short chain dehydrogenase/reductase CPUR_05418 then catalyzes the C-5 ketoreduction to give the xanthone skeleton of the monomeric units. Ergochromes formation requires further dimerization steps of different xanthone units, probably catalyzed by the cytochrome P450 monooxygenase CPUR_05419. CPUR_05425, CPUR_05426 and CPUR_05431 are unique to Claviceps, thus it is likely that they are involved in further modification of xanthone units or in their dimerization. The yellow ergochromes and the red anthraquinone pigments endocrocin and clavorubin are products from the same PKS derived precursors and the latter are likely shunt products in the pathway of xanthone biosynthesis. It is proposed that atrochrysone carboxylic acid released from the PKS CPUR_05437 can also be converted to endocrocin anthrone which is further oxidized into endocrocin by CPUR_05435. Endocrocin could be then modified to clavorubin, possibly by CPUR_05423 and CPUR_05431. Clavorubin is the principal anthraquinone metabolite produced by the cluster with a much higher yield compared to endocrocin. The sequence is that of Short chain dehydrogenase CPUR_05429 from Claviceps purpurea (strain 20.1) (Ergot fungus).